We begin with the raw amino-acid sequence, 82 residues long: Myosin light chain alkali (82 aa).

Positions 7-42 constitute an EF-hand domain; it reads GCYGDFIECLKLYDKEENGTMMLAELQHALLALGES.

Myosin is a hexamer of 2 heavy chains and 4 light chains.

This chain is Myosin light chain alkali (Mlc1), found in Drosophila sechellia (Fruit fly).